A 491-amino-acid polypeptide reads, in one-letter code: MATFKDACYHYKRLNKLNSLVLKLGANDEWRPAPMTKYKGWCLDCCQYTNLTYCRGCALYHVCQWCSQYNRCFLDEEPHLLRMRTFKDVVTKEDIEGLLTMYETLFPINEKLVNKFINSVKQRKCRNEYLLEWYNHLLMPITLQALTINLEDNVYYIFGYYDCMEHENQTPFQFINLLEKYDKLLLDDRNFHRMSHLPVILQQEYALRYFSKSRFLSKGKKRLSRSDFSDNLMEDRHSPTSLMQVVRNCISIHINDCEWNKACTLIVDARNYISIMNSSYTEHYSVSQRCKLFTKYKFGIVSRLVKPNYIFSSHESCALNVHNCKWCQINNHYKVWEDFRLRKIYNNVMDFIRALMKSNGNVGHCSSQESVYKYIPDLFLICKTEKWNEAVEMLFNYLEPVDINGTEYVLLDYEVNWEVRGLVMQNMDGKVPRILNMNDTKKILSAMIFDWFDTRYMRETPMTTSTTNQLRTLNKRNELIDEYDLELSDVE.

Residues 1–81 (MATFKDACYH…CFLDEEPHLL (81 aa)) form an RNA-binding region. A zinc-binding domain region spans residues 42 to 79 (CLDCCQYTNLTYCRGCALYHVCQWCSQYNRCFLDEEPH). The tract at residues 82–176 (RMRTFKDVVT…ENQTPFQFIN (95 aa)) is important for cytoskeleton localization. Residues 320 to 491 (NVHNCKWCQI…EYDLELSDVE (172 aa)) form an interaction with host IRF3 region. A pLxIS motif motif is present at residues 485-488 (LELS).

It belongs to the rotavirus NSP1 family. Interacts (via C-terminus) with host IRF3; this interaction leads to IRF3 degradation. Interacts with host IRF7; this interaction leads to IRF7 degradation. Interacts with host CUL1 and CUL3.

The protein localises to the host cytoplasm. The protein resides in the host cytoskeleton. Plays a role in the inhibition of host innate immunity by inducing the degradation of key host factors required to activate interferon production such as IRF3, IRF5 or IRF7. Associates with components of cullin RING ligases (CRLs) including CUL1 or CUL3, which are essential multisubunit ubiquitination complexes, to modulate their activities. This chain is Non-structural protein 1, found in Bos taurus (Bovine).